A 921-amino-acid chain; its full sequence is MATNILTKIFGSRNDRQLKQYRKSVVRINAMEAELEKLSDEALRGKTQEFKDRIAKGESLDALLPEAFAVVREGSKRVMKMRHFDVQLLGGMSLHNGKISEMGTGEGKTLTATMPVYLNALTGKGVHVVTVNDYLANRDAQWMGKLYNFLGLSVGINLPNMAREEKQAAYRADITYGTNNEYGFDYLRDNMVYEGADRVQRGLNYAIVDEVDSILIDEARTPLIISGQAEDQTDLYIAINKVVPLLQRQEGEEDIRTGEGVTKPGDFTVDEKSHQVFLTEQGHESAERILSELGLIPEGATLYDPANITLMHHLYAALRANHLYHRDQHYVVQNGEIVIVDEFTGRLMSGRRWSEGLHQAVEAKEGVAIQPENQTMASITFQNYFRLYGKLAGMTGTADTEAYEFQEIYGLETLVMPPNRPSRRDDQLDRVYKTTREKYEAAIKDIRECYERGQPVLVGTTSIENSEIIAALLDKEKLPHQVLNAKQHAREAEIIAQAGRSKVITIATNMAGRGTDIVLGGNVSKELEAVEADETLTAEQKQQQIDAIQAQWVQEHEKVKALGGLRIIATERHESRRIDNQLRGRSGRQGDPGSSRFYLSLDDSLMRIFAGDRVKAIMDRLKMPDGEAIEAGIVTRSIESAQRKVESRNFDMRKQLLEYDDVANDQRKVIYQQRNEILDAGDLSAQIASLRAGCFDDLVRQYVPVESVEEQWDIATLEKVLADDWQLNLALQQQVSAASAITDHDLLTSVQQEADRVFAAKVEQVGGENFTQFERMVLLQSIDTHWREHLSSLDYLRQGIHLRGYAQKQPKQEYKREAFELFSQLLDAVKNDVTKVLMTVKVQSSEQLEQAAEDMESRGESIANVTYMAPTETGEVETITDDETFRKKSTIPGGNVPRVGRNELCPCGSGKKYKHCHGKLA.

Residues Gln87, 105–109, and Asp516 each bind ATP; that span reads GEGKT. Zn(2+) is bound by residues Cys905, Cys907, Cys916, and His917.

This sequence belongs to the SecA family. As to quaternary structure, monomer and homodimer. Part of the essential Sec protein translocation apparatus which comprises SecA, SecYEG and auxiliary proteins SecDF-YajC and YidC. The cofactor is Zn(2+).

The protein resides in the cell inner membrane. Its subcellular location is the cytoplasm. The catalysed reaction is ATP + H2O + cellular proteinSide 1 = ADP + phosphate + cellular proteinSide 2.. Part of the Sec protein translocase complex. Interacts with the SecYEG preprotein conducting channel. Has a central role in coupling the hydrolysis of ATP to the transfer of proteins into and across the cell membrane, serving both as a receptor for the preprotein-SecB complex and as an ATP-driven molecular motor driving the stepwise translocation of polypeptide chains across the membrane. The protein is Protein translocase subunit SecA of Albidiferax ferrireducens (strain ATCC BAA-621 / DSM 15236 / T118) (Rhodoferax ferrireducens).